Here is a 2479-residue protein sequence, read N- to C-terminus: Centrosomal protein of 290 kDa (2479 aa).

The interval 1 to 695 (MPPNINWKEI…IESKNAEGIF (695 aa)) is self-association (with itself or C-terminus). Coiled coils occupy residues 59–565 (MKMK…ERGK), 598–664 (SLKN…MQKD), 697–931 (ASLH…VCEK), 958–1027 (SLSE…IEQA), 1071–1498 (QRAE…ILSR), 1533–1584 (HTLK…LHIL), and 1635–2452 (DSLS…SEQL). Basic and acidic residues predominate over residues 149–163 (ALRNEEAENENSKLR). The tract at residues 149–168 (ALRNEEAENENSKLRRENKR) is disordered. Residues 696–896 (DASLHLKAQV…TVLQVNEKSL (201 aa)) are interaction with IQCB1. The interval 1966–2479 (TTGMTVDQVL…EESPVNFPIY (514 aa)) is self-association (with itself or N-terminus). A disordered region spans residues 2458–2479 (SPVAASEEFEDEEESPVNFPIY).

Part of the tectonic-like complex (also named B9 complex). Interacts with ATF4 via its N-terminal region. Associates with the BBSome complex, interacting (via N-terminus) with BBS4. Interacts with IQCB1/NPHP5; IQCB1 and CEP290/NPHP6 are proposed to form a functional NPHP5-6 module localized to the centrosome. Interacts with NPHP4; the interaction likely requires additional interactors. Interacts with ZNF423, FAM161A, CEP162, CEP162, CEP131, TALPID3, CCDC13, CC2D2A, RPGRIP1. Can self-associate (homo- or heteromeric). Interacts with CCP110; required for suppressing cilia formation. Interacts with RPGR. Associates (via C-terminus) with microtubules; association to microtubule is reduced in response to cellular stress, such as ultraviolet light (UV) radiation or heat shock, in a process that requires p38 MAP kinase signaling. Interacts with FAM161A. Interacts with PCM1. Interacts with CCDC66. Interacts with ARMC9 and CSPP1. Ubiquitinated. May undergo monoubiquitination; monoubiquitination is inhibited in response to cellular stress, such as ultraviolet light (UV) radiation or heat shock, but does not cause its displacement from centriolar satellites. As to expression, ubiquitous. Expressed strongly in placenta and weakly in brain.

The protein localises to the cytoplasm. It is found in the cytoskeleton. It localises to the microtubule organizing center. The protein resides in the centrosome. Its subcellular location is the centriolar satellite. The protein localises to the nucleus. It is found in the cell projection. It localises to the cilium. The protein resides in the cilium basal body. Its subcellular location is the centriole. The protein localises to the cytoplasmic vesicle. Involved in early and late steps in cilia formation. Its association with CCP110 is required for inhibition of primary cilia formation by CCP110. May play a role in early ciliogenesis in the disappearance of centriolar satellites and in the transition of primary ciliar vesicles (PCVs) to capped ciliary vesicles (CCVs). Required for the centrosomal recruitment of RAB8A and for the targeting of centriole satellite proteins to centrosomes such as of PCM1. Required for the correct localization of ciliary and phototransduction proteins in retinal photoreceptor cells; may play a role in ciliary transport processes. Required for efficient recruitment of RAB8A to primary cilium. In the ciliary transition zone is part of the tectonic-like complex which is required for tissue-specific ciliogenesis and may regulate ciliary membrane composition. Involved in regulation of the BBSome complex integrity, specifically for presence of BBS2, BBS5 and BBS8/TTC8 in the complex, and in ciliary targeting of selected BBSome cargos. May play a role in controlling entry of the BBSome complex to cilia possibly implicating IQCB1/NPHP5. Activates ATF4-mediated transcription. This is Centrosomal protein of 290 kDa (CEP290) from Homo sapiens (Human).